Here is a 263-residue protein sequence, read N- to C-terminus: Inner membrane protein YpjD (263 aa).

Topologically, residues 1 to 3 are periplasmic; sequence MPV. A helical transmembrane segment spans residues 4–23; sequence FALLALVAYSVSLALIVPGL. The Cytoplasmic segment spans residues 24 to 34; it reads LQKNGGWRRMA. The chain crosses the membrane as a helical span at residues 35 to 54; the sequence is IISAVIALVCHAIALEARIL. Topologically, residues 55-63 are periplasmic; it reads PDGDSGQNL. The chain crosses the membrane as a helical span at residues 64 to 83; that stretch reads SLLNVGSLVSLMICTVMTIV. Topologically, residues 84 to 89 are cytoplasmic; the sequence is ASRNRG. The chain crosses the membrane as a helical span at residues 90–109; the sequence is WLLLPIVYAFALINLALATF. Residues 110–123 lie on the Periplasmic side of the membrane; the sequence is MPNEYITHLEATPG. The chain crosses the membrane as a helical span at residues 124-146; that stretch reads MLVHIGLSLFSYATLIIAALYAL. Residues 147–181 lie on the Cytoplasmic side of the membrane; sequence QLAWIDYQLKNKKLAFNQEMPPLMSIERKMFHITQ. A helical transmembrane segment spans residues 182 to 201; that stretch reads IGVVLLTLTLCTGLFYMHNL. Over 202–210 the chain is Periplasmic; the sequence is FSMENIDKA. Residues 211–228 traverse the membrane as a helical segment; sequence VLSIVAWFVYIVLLWGHY. Topologically, residues 229–236 are cytoplasmic; sequence HEGWRGRR. Residues 237-259 form a helical membrane-spanning segment; that stretch reads VVWFNVAGAVILTLAYFGSRIVQ. Residues 260–263 lie on the Periplasmic side of the membrane; sequence QLIS.

It is found in the cell inner membrane. This Escherichia coli O157:H7 protein is Inner membrane protein YpjD (ypjD).